The primary structure comprises 543 residues: Hydroxylamine reductase (543 aa).

4 residues coordinate [4Fe-4S] cluster: cysteine 5, cysteine 8, cysteine 17, and cysteine 23. Residues histidine 250, glutamate 274, cysteine 318, cysteine 410, cysteine 438, cysteine 463, glutamate 498, and lysine 500 each coordinate hybrid [4Fe-2O-2S] cluster. Cysteine 410 carries the post-translational modification Cysteine persulfide.

Belongs to the HCP family. [4Fe-4S] cluster serves as cofactor. Requires hybrid [4Fe-2O-2S] cluster as cofactor.

The protein localises to the cytoplasm. It catalyses the reaction A + NH4(+) + H2O = hydroxylamine + AH2 + H(+). Catalyzes the reduction of hydroxylamine to form NH(3) and H(2)O. The sequence is that of Hydroxylamine reductase from Petrotoga mobilis (strain DSM 10674 / SJ95).